The sequence spans 115 residues: DNA-binding protein STK_13740 (115 aa).

The protein belongs to the PDCD5 family.

The protein is DNA-binding protein STK_13740 of Sulfurisphaera tokodaii (strain DSM 16993 / JCM 10545 / NBRC 100140 / 7) (Sulfolobus tokodaii).